The sequence spans 183 residues: Endoribonuclease AbiQ (183 aa).

It belongs to the ToxN/AbiQ toxin family. In terms of assembly, forms a triangular heterohexamer with a single 35-nt-long repeat of RNA antitoxin AntiQ.

The protein localises to the cytoplasm. Its function is as follows. Toxic component of a type III toxin-antitoxin (TA) system. An endoribonuclease that is probably sequence-specific. It is neutralized by its cognate antitoxin RNA AntiQ, which has 2.8 35 nucleotide-long repeats. Cannot be cloned in L.lactis subsp. cremoris strain NZ9000 in the absence of the antitoxin gene; expression in strain NZ9000 even in the presence of antiQ inhibits growth in a bacteriostatic fashion. Confers resistance to 936 and c2 phages but not P335 phages in L.lactis, causes an abortive infection (Abi phenotype). Viral DNA is replicated but not cleaved from its concatemeric form, while the viral major structural protein is produced normally in the presence of this protein. Operon expression in E.coli confers resistance to 3 phages of the Myoviridae family (T4, RB69 and phage 2) and 1 of the Siphoviridae family (T5), but not other tested phages (T1, T3, lambda vir, HK97, Mu and pilH alpha). The presence of this operon in L.lactis subsp. lactis strain IL1403 during phage P008 infection alters the viral transcription profiles. The polypeptide is Endoribonuclease AbiQ (Lactococcus lactis subsp. lactis (Streptococcus lactis)).